Consider the following 448-residue polypeptide: MAPEIFVKFKCASRDIKLLWASVFLRLLSYGLTNQVLTLFLNAINMTEDKIGLFMSLTLAGDVICSYILTWYADSWGRRRVLVYGCAMMLLSGLVFSFSENFTLLLVFAIFGVISPSSDEVGPFKSIEEAMIAHLSPHNARPEIYAIHALVGTIGSALGAIICGIFVDLLKRTGLAATDLQCYKLVFLLYAFFAFCKMVIMLLLSDATELDGHYEHTDCNEETAEPLDVNDETAPLMRQATHPEERSNKLSKETVSVLMKLLVIFMVDSLGSGFMTSGWMVYYYSKQFLMGSLALGTLFFITQLVMASSTIPSSIIARCFGPVRATLLVQIPSGIFSILIPMAKNYLPLSILFLNLHFATTAMDVTPRQILLTNIIKPRDLTKVMGVVNIGKTFARCVGPIFTGILANNNYLWLCYIISGSLVITADLILACMFLGVDAKIKKQMNRH.

Residues 1–50 (MAPEIFVKFKCASRDIKLLWASVFLRLLSYGLTNQVLTLFLNAINMTEDK) lie on the Extracellular side of the membrane. The chain crosses the membrane as a helical span at residues 51-71 (IGLFMSLTLAGDVICSYILTW). The Cytoplasmic segment spans residues 72–93 (YADSWGRRRVLVYGCAMMLLSG). The helical transmembrane segment at 94-114 (LVFSFSENFTLLLVFAIFGVI) threads the bilayer. Residues 115–146 (SPSSDEVGPFKSIEEAMIAHLSPHNARPEIYA) lie on the Extracellular side of the membrane. Residues 147 to 167 (IHALVGTIGSALGAIICGIFV) traverse the membrane as a helical segment. Topologically, residues 168–184 (DLLKRTGLAATDLQCYK) are cytoplasmic. The chain crosses the membrane as a helical span at residues 185 to 205 (LVFLLYAFFAFCKMVIMLLLS). Residues 206 to 260 (DATELDGHYEHTDCNEETAEPLDVNDETAPLMRQATHPEERSNKLSKETVSVLMK) are Extracellular-facing. A helical membrane pass occupies residues 261–281 (LLVIFMVDSLGSGFMTSGWMV). The Cytoplasmic segment spans residues 282 to 287 (YYYSKQ). Residues 288–308 (FLMGSLALGTLFFITQLVMAS) traverse the membrane as a helical segment. Topologically, residues 309 to 333 (STIPSSIIARCFGPVRATLLVQIPS) are extracellular. The helical transmembrane segment at 334 to 354 (GIFSILIPMAKNYLPLSILFL) threads the bilayer. Topologically, residues 355–386 (NLHFATTAMDVTPRQILLTNIIKPRDLTKVMG) are cytoplasmic. Residue 386 to 393 (GVVNIGKT) coordinates ATP. Residues 387 to 407 (VVNIGKTFARCVGPIFTGILA) form a helical membrane-spanning segment. The Extracellular portion of the chain corresponds to 408 to 416 (NNNYLWLCY). Residues 417 to 437 (IISGSLVITADLILACMFLGV) traverse the membrane as a helical segment. The Cytoplasmic segment spans residues 438–448 (DAKIKKQMNRH).

It is found in the membrane. This is an uncharacterized protein from Saccharomyces cerevisiae (strain ATCC 204508 / S288c) (Baker's yeast).